Here is a 111-residue protein sequence, read N- to C-terminus: UPF0060 membrane protein Ajs_1473 (111 aa).

Helical transmembrane passes span 8–28 (ILFAVTAVAEIVGCYLPWLVV), 33–53 (SAWLLLPAAVSLSLFAWLLTL), 65–85 (YGGMYIAVALVWLHVVDGVAL), and 88–108 (WDFVGAAIALAGMSVIALQPA).

The protein belongs to the UPF0060 family.

Its subcellular location is the cell inner membrane. This is UPF0060 membrane protein Ajs_1473 from Acidovorax sp. (strain JS42).